Reading from the N-terminus, the 33-residue chain is uncharacterized protein (33 aa).

A helical membrane pass occupies residues 11–31 (LALVIYMSVVLLLMVGVPLLF).

It is found in the membrane. This is an uncharacterized protein from Saccharomyces cerevisiae (strain ATCC 204508 / S288c) (Baker's yeast).